The sequence spans 110 residues: Ferredoxin (110 aa).

2 consecutive 4Fe-4S ferredoxin-type domains span residues 2–30 and 31–60; these read TYIV…YEGE and FMLV…PESP. The [3Fe-4S] cluster site is built by Cys-9 and Cys-17. [4Fe-4S] cluster contacts are provided by Cys-21, Cys-40, Cys-43, and Cys-46. Residue Cys-50 participates in [3Fe-4S] cluster binding.

[4Fe-4S] cluster serves as cofactor. [3Fe-4S] cluster is required as a cofactor.

Its function is as follows. Ferredoxins are iron-sulfur proteins that transfer electrons in a wide variety of metabolic reactions. The polypeptide is Ferredoxin (fdxA) (Rickettsia typhi (strain ATCC VR-144 / Wilmington)).